The sequence spans 248 residues: Granzyme-like protein 1 (248 aa).

The signal sequence occupies residues 1–18; sequence MNLLLLLLTVSLAPTTEA. Residues 19-20 constitute a propeptide, activation peptide; the sequence is AE. The 226-residue stretch at 21–246 folds into the Peptidase S1 domain; it reads IIGGHEADPH…FLSWIEETMK (226 aa). Residues Cys-50 and Cys-66 are joined by a disulfide bond. The active-site Charge relay system is the His-65. Residue Asn-72 is glycosylated (N-linked (GlcNAc...) asparagine). Asp-109 functions as the Charge relay system in the catalytic mechanism. Cystine bridges form between Cys-143–Cys-210 and Cys-174–Cys-189. Catalysis depends on Ser-204, which acts as the Charge relay system.

This sequence belongs to the peptidase S1 family. Granzyme subfamily. Duodenum.

This enzyme is necessary for target cell lysis in cell-mediated immune responses. The protein is Granzyme-like protein 1 of Rattus norvegicus (Rat).